The following is a 340-amino-acid chain: Uroporphyrinogen decarboxylase (340 aa).

Substrate is bound by residues 21–25, Phe40, Asp71, Tyr147, Ser202, and His316; that span reads RQAGR.

The protein belongs to the uroporphyrinogen decarboxylase family. In terms of assembly, homodimer.

The protein localises to the cytoplasm. The catalysed reaction is uroporphyrinogen III + 4 H(+) = coproporphyrinogen III + 4 CO2. The protein operates within porphyrin-containing compound metabolism; protoporphyrin-IX biosynthesis; coproporphyrinogen-III from 5-aminolevulinate: step 4/4. In terms of biological role, catalyzes the decarboxylation of four acetate groups of uroporphyrinogen-III to yield coproporphyrinogen-III. This Helicobacter hepaticus (strain ATCC 51449 / 3B1) protein is Uroporphyrinogen decarboxylase.